We begin with the raw amino-acid sequence, 464 residues long: Maturase K (464 aa).

It belongs to the intron maturase 2 family. MatK subfamily.

It localises to the plastid. The protein resides in the chloroplast. In terms of biological role, usually encoded in the trnK tRNA gene intron. Probably assists in splicing its own and other chloroplast group II introns. This chain is Maturase K, found in Castanea crenata (Japanese chestnut).